A 231-amino-acid polypeptide reads, in one-letter code: Sugar fermentation stimulation protein homolog (231 aa).

The protein belongs to the SfsA family.

This chain is Sugar fermentation stimulation protein homolog, found in Geotalea daltonii (strain DSM 22248 / JCM 15807 / FRC-32) (Geobacter daltonii).